A 137-amino-acid polypeptide reads, in one-letter code: MPNFAGTWKMRSSENFDELLKALGVNAMLRKVAVAAASKPHVEIRQDGDQFYIKTSTTVRTTEINFKVGEGFEEETVDGRKCRSLATWENENKIHCTQTLLEGDGPKTYWTRELANDELILTFGADDVVCTRIYVRE.

Positions 21–31 (KALGVNAMLRK) match the Nuclear localization signal motif. 132 to 134 (RIY) serves as a coordination point for all-trans-retinoate.

The protein belongs to the calycin superfamily. Fatty-acid binding protein (FABP) family.

The protein resides in the cytoplasm. Cytosolic CRABPs may regulate the access of retinoic acid to the nuclear retinoic acid receptors. The protein is Cellular retinoic acid-binding protein 1 (CRABP1) of Homo sapiens (Human).